The sequence spans 610 residues: UvrABC system protein C (610 aa).

The GIY-YIG domain maps to 16-94 (SQPGVYRMYD…IKLYQPRYNV (79 aa)). The region spanning 204–239 (DQVLTQLIARMEKASQDLAFEEAARIRDQIQAVRRV) is the UVR domain.

This sequence belongs to the UvrC family. In terms of assembly, interacts with UvrB in an incision complex.

The protein resides in the cytoplasm. Its function is as follows. The UvrABC repair system catalyzes the recognition and processing of DNA lesions. UvrC both incises the 5' and 3' sides of the lesion. The N-terminal half is responsible for the 3' incision and the C-terminal half is responsible for the 5' incision. This Salmonella typhimurium (strain LT2 / SGSC1412 / ATCC 700720) protein is UvrABC system protein C.